Here is a 290-residue protein sequence, read N- to C-terminus: 2-dehydro-3-deoxy-phosphogluconate/2-dehydro-3-deoxy-6-phosphogalactonate aldolase (290 aa).

Residues Thr-42–Thr-43, Tyr-129–Tyr-131, and Lys-155–Thr-157 each bind substrate. The Schiff-base intermediate with substrate role is filled by Lys-155.

This sequence belongs to the DapA family. KDPG aldolase subfamily. In terms of assembly, homotetramer; dimer of dimers.

The enzyme catalyses 2-dehydro-3-deoxy-6-phospho-D-gluconate = D-glyceraldehyde 3-phosphate + pyruvate. It carries out the reaction 2-dehydro-3-deoxy-6-phospho-D-galactonate = D-glyceraldehyde 3-phosphate + pyruvate. It participates in carbohydrate acid metabolism; 2-dehydro-3-deoxy-D-gluconate degradation; D-glyceraldehyde 3-phosphate and pyruvate from 2-dehydro-3-deoxy-D-gluconate: step 2/2. Its function is as follows. Involved in the degradation of glucose and galactose via the Entner-Doudoroff pathway. Catalyzes the reversible cleavage of 2-keto-3-deoxy-6-phosphogluconate (KDPG) and 2-keto-3-deoxygluconate (KDG) forming pyruvate and glyceraldehyde 3-phosphate or glyceraldehyde, respectively. It is also able to catalyze the reversible cleavage of 2-keto-3-deoxy-6-phosphogalactonate (KDPGal) and 2-keto-3-deoxygalactonate (KDGal). This Sulfurisphaera tokodaii (strain DSM 16993 / JCM 10545 / NBRC 100140 / 7) (Sulfolobus tokodaii) protein is 2-dehydro-3-deoxy-phosphogluconate/2-dehydro-3-deoxy-6-phosphogalactonate aldolase (kdgA).